Reading from the N-terminus, the 597-residue chain is 2-succinyl-5-enolpyruvyl-6-hydroxy-3-cyclohexene-1-carboxylate synthase (597 aa).

The protein belongs to the TPP enzyme family. MenD subfamily. Homodimer. The cofactor is Mg(2+). Mn(2+) is required as a cofactor. Requires thiamine diphosphate as cofactor.

The enzyme catalyses isochorismate + 2-oxoglutarate + H(+) = 5-enolpyruvoyl-6-hydroxy-2-succinyl-cyclohex-3-ene-1-carboxylate + CO2. It functions in the pathway quinol/quinone metabolism; 1,4-dihydroxy-2-naphthoate biosynthesis; 1,4-dihydroxy-2-naphthoate from chorismate: step 2/7. The protein operates within cofactor biosynthesis; phylloquinone biosynthesis. Catalyzes the thiamine diphosphate-dependent decarboxylation of 2-oxoglutarate and the subsequent addition of the resulting succinic semialdehyde-thiamine pyrophosphate anion to isochorismate to yield 2-succinyl-5-enolpyruvyl-6-hydroxy-3-cyclohexene-1-carboxylate (SEPHCHC). The sequence is that of 2-succinyl-5-enolpyruvyl-6-hydroxy-3-cyclohexene-1-carboxylate synthase from Synechococcus sp. (strain JA-3-3Ab) (Cyanobacteria bacterium Yellowstone A-Prime).